A 900-amino-acid polypeptide reads, in one-letter code: Probable dipeptidyl-aminopeptidase B (900 aa).

The segment at 1-83 (MARTDQGLGA…DILSHPRDKS (83 aa)) is disordered. The Cytoplasmic segment spans residues 1–90 (MARTDQGLGA…DKSKRSRGSR (90 aa)). Residues 24–39 (NSFSSTDSLSTDGSLF) are compositionally biased toward low complexity. Positions 44-55 (NATQFQKSTQLP) are enriched in polar residues. Residues 91 to 111 (WIWVIGLLCLGGWILAFILFW) form a helical; Signal-anchor for type II membrane protein membrane-spanning segment. Residues 112-900 (GRRNNNSDIS…HHVGSALAAT (789 aa)) are Vacuolar-facing. N-linked (GlcNAc...) asparagine glycosylation is found at Asn-150, Asn-195, Asn-348, Asn-410, Asn-514, Asn-639, and Asn-644. Ser-753 acts as the Charge relay system in catalysis. An N-linked (GlcNAc...) asparagine glycan is attached at Asn-812. Active-site charge relay system residues include Asp-830 and His-863.

It belongs to the peptidase S9B family.

The protein resides in the vacuole membrane. The enzyme catalyses Release of an N-terminal dipeptide, Xaa-Yaa-|-Zaa-, from a polypeptide, preferentially when Yaa is Pro, provided Zaa is neither Pro nor hydroxyproline.. In terms of biological role, type IV dipeptidyl-peptidase which removes N-terminal dipeptides sequentially from polypeptides having unsubstituted N-termini provided that the penultimate residue is proline. The protein is Probable dipeptidyl-aminopeptidase B (dapB) of Talaromyces stipitatus (strain ATCC 10500 / CBS 375.48 / QM 6759 / NRRL 1006) (Penicillium stipitatum).